We begin with the raw amino-acid sequence, 430 residues long: Adenylosuccinate synthetase (430 aa).

Residues 12–18 (GDEGKGK) and 40–42 (GHT) each bind GTP. Asp13 functions as the Proton acceptor in the catalytic mechanism. Mg(2+) is bound by residues Asp13 and Gly40. Residues 13–16 (DEGK), 38–41 (NAGH), Thr128, Arg142, Gln223, Thr238, and Arg302 contribute to the IMP site. Catalysis depends on His41, which acts as the Proton donor. Residue 298-304 (TTTGRPR) coordinates substrate. Residues Arg304, 330 to 332 (SID), and 412 to 414 (SVG) each bind GTP.

This sequence belongs to the adenylosuccinate synthetase family. In terms of assembly, homodimer. Requires Mg(2+) as cofactor.

It localises to the cytoplasm. The catalysed reaction is IMP + L-aspartate + GTP = N(6)-(1,2-dicarboxyethyl)-AMP + GDP + phosphate + 2 H(+). Its pathway is purine metabolism; AMP biosynthesis via de novo pathway; AMP from IMP: step 1/2. In terms of biological role, plays an important role in the de novo pathway of purine nucleotide biosynthesis. Catalyzes the first committed step in the biosynthesis of AMP from IMP. The chain is Adenylosuccinate synthetase from Streptococcus pyogenes serotype M2 (strain MGAS10270).